A 456-amino-acid polypeptide reads, in one-letter code: Bifunctional protein GlmU (456 aa).

Residues 1–228 form a pyrophosphorylase region; it reads MPQNTLNIVI…SHLAAGVNNK (228 aa). UDP-N-acetyl-alpha-D-glucosamine-binding positions include 11-14, Lys-25, Gln-75, 80-81, 102-104, Gly-138, Glu-153, Asn-168, and Asn-226; these read LAAG, GT, and YGD. Asp-104 serves as a coordination point for Mg(2+). Asn-226 is a Mg(2+) binding site. The tract at residues 229–249 is linker; that stretch reads LQLTELERIFQTEQAQELLKA. An N-acetyltransferase region spans residues 250–456; that stretch reads GVTLRDPARF…GWVRPEKDKQ (207 aa). UDP-N-acetyl-alpha-D-glucosamine is bound by residues Arg-332 and Lys-350. His-362 serves as the catalytic Proton acceptor. UDP-N-acetyl-alpha-D-glucosamine is bound by residues Tyr-365 and Asn-376. Residues Ala-379, 385–386, Ser-404, Ala-422, and Arg-439 contribute to the acetyl-CoA site; that span reads NY.

In the N-terminal section; belongs to the N-acetylglucosamine-1-phosphate uridyltransferase family. This sequence in the C-terminal section; belongs to the transferase hexapeptide repeat family. In terms of assembly, homotrimer. Mg(2+) serves as cofactor.

It localises to the cytoplasm. It catalyses the reaction alpha-D-glucosamine 1-phosphate + acetyl-CoA = N-acetyl-alpha-D-glucosamine 1-phosphate + CoA + H(+). It carries out the reaction N-acetyl-alpha-D-glucosamine 1-phosphate + UTP + H(+) = UDP-N-acetyl-alpha-D-glucosamine + diphosphate. It functions in the pathway nucleotide-sugar biosynthesis; UDP-N-acetyl-alpha-D-glucosamine biosynthesis; N-acetyl-alpha-D-glucosamine 1-phosphate from alpha-D-glucosamine 6-phosphate (route II): step 2/2. It participates in nucleotide-sugar biosynthesis; UDP-N-acetyl-alpha-D-glucosamine biosynthesis; UDP-N-acetyl-alpha-D-glucosamine from N-acetyl-alpha-D-glucosamine 1-phosphate: step 1/1. The protein operates within bacterial outer membrane biogenesis; LPS lipid A biosynthesis. Functionally, catalyzes the last two sequential reactions in the de novo biosynthetic pathway for UDP-N-acetylglucosamine (UDP-GlcNAc). The C-terminal domain catalyzes the transfer of acetyl group from acetyl coenzyme A to glucosamine-1-phosphate (GlcN-1-P) to produce N-acetylglucosamine-1-phosphate (GlcNAc-1-P), which is converted into UDP-GlcNAc by the transfer of uridine 5-monophosphate (from uridine 5-triphosphate), a reaction catalyzed by the N-terminal domain. The polypeptide is Bifunctional protein GlmU (Neisseria meningitidis serogroup B (strain ATCC BAA-335 / MC58)).